The following is a 61-amino-acid chain: Small ribosomal subunit protein uS14 (61 aa).

Zn(2+) is bound by residues Cys24, Cys27, Cys40, and Cys43.

This sequence belongs to the universal ribosomal protein uS14 family. Zinc-binding uS14 subfamily. As to quaternary structure, part of the 30S ribosomal subunit. Contacts proteins S3 and S10. The cofactor is Zn(2+).

Binds 16S rRNA, required for the assembly of 30S particles and may also be responsible for determining the conformation of the 16S rRNA at the A site. The protein is Small ribosomal subunit protein uS14 of Thermotoga neapolitana (strain ATCC 49049 / DSM 4359 / NBRC 107923 / NS-E).